A 647-amino-acid chain; its full sequence is 1-deoxy-D-xylulose-5-phosphate synthase (647 aa).

Thiamine diphosphate contacts are provided by residues His-79 and 120-122; that span reads GHA. Asp-152 contributes to the Mg(2+) binding site. Residues 153-154, Asn-181, Phe-293, and Glu-377 contribute to the thiamine diphosphate site; that span reads GS. Asn-181 is a binding site for Mg(2+).

Belongs to the transketolase family. DXPS subfamily. Homodimer. Requires Mg(2+) as cofactor. The cofactor is thiamine diphosphate.

It catalyses the reaction D-glyceraldehyde 3-phosphate + pyruvate + H(+) = 1-deoxy-D-xylulose 5-phosphate + CO2. Its pathway is metabolic intermediate biosynthesis; 1-deoxy-D-xylulose 5-phosphate biosynthesis; 1-deoxy-D-xylulose 5-phosphate from D-glyceraldehyde 3-phosphate and pyruvate: step 1/1. Its function is as follows. Catalyzes the acyloin condensation reaction between C atoms 2 and 3 of pyruvate and glyceraldehyde 3-phosphate to yield 1-deoxy-D-xylulose-5-phosphate (DXP). The sequence is that of 1-deoxy-D-xylulose-5-phosphate synthase from Bacteroides thetaiotaomicron (strain ATCC 29148 / DSM 2079 / JCM 5827 / CCUG 10774 / NCTC 10582 / VPI-5482 / E50).